Reading from the N-terminus, the 279-residue chain is Phosphatidylglycerol--prolipoprotein diacylglyceryl transferase (279 aa).

The next 3 membrane-spanning stretches (helical) occupy residues 18–38 (LSVR…YFVA), 55–75 (IIFY…VIFQ), and 89–109 (IWHG…AGVI). R137 contributes to the a 1,2-diacyl-sn-glycero-3-phospho-(1'-sn-glycerol) binding site. Helical transmembrane passes span 203–223 (LGET…FIEG) and 235–255 (IRVA…LIVY).

Belongs to the Lgt family.

It localises to the cell membrane. The catalysed reaction is L-cysteinyl-[prolipoprotein] + a 1,2-diacyl-sn-glycero-3-phospho-(1'-sn-glycerol) = an S-1,2-diacyl-sn-glyceryl-L-cysteinyl-[prolipoprotein] + sn-glycerol 1-phosphate + H(+). It functions in the pathway protein modification; lipoprotein biosynthesis (diacylglyceryl transfer). Functionally, catalyzes the transfer of the diacylglyceryl group from phosphatidylglycerol to the sulfhydryl group of the N-terminal cysteine of a prolipoprotein, the first step in the formation of mature lipoproteins. This chain is Phosphatidylglycerol--prolipoprotein diacylglyceryl transferase, found in Staphylococcus aureus (strain bovine RF122 / ET3-1).